The primary structure comprises 257 residues: NAD-capped RNA hydrolase NudC (257 aa).

Residue arginine 69 coordinates substrate. Zn(2+) is bound by residues cysteine 98 and cysteine 101. Glutamate 111 provides a ligand contact to substrate. The Zn(2+) site is built by cysteine 116 and cysteine 119. Tyrosine 124 is a substrate binding site. A Nudix hydrolase domain is found at 125 to 248; sequence PQIAPCIIVA…TVARRLIEDT (124 aa). The a divalent metal cation site is built by alanine 158, glutamate 174, and glutamate 178. Positions 159-180 match the Nudix box motif; sequence GFVEVGETLEQAVAREVMEESG. Residue 192–199 participates in substrate binding; sequence QPWPFPQS. Glutamate 219 lines the a divalent metal cation pocket. Alanine 241 contacts substrate.

Belongs to the Nudix hydrolase family. NudC subfamily. As to quaternary structure, homodimer. Requires Mg(2+) as cofactor. The cofactor is Mn(2+). Zn(2+) serves as cofactor.

It carries out the reaction a 5'-end NAD(+)-phospho-ribonucleoside in mRNA + H2O = a 5'-end phospho-adenosine-phospho-ribonucleoside in mRNA + beta-nicotinamide D-ribonucleotide + 2 H(+). It catalyses the reaction NAD(+) + H2O = beta-nicotinamide D-ribonucleotide + AMP + 2 H(+). The catalysed reaction is NADH + H2O = reduced beta-nicotinamide D-ribonucleotide + AMP + 2 H(+). In terms of biological role, mRNA decapping enzyme that specifically removes the nicotinamide adenine dinucleotide (NAD) cap from a subset of mRNAs by hydrolyzing the diphosphate linkage to produce nicotinamide mononucleotide (NMN) and 5' monophosphate mRNA. The NAD-cap is present at the 5'-end of some mRNAs and stabilizes RNA against 5'-processing. Has preference for mRNAs with a 5'-end purine. Catalyzes the hydrolysis of a broad range of dinucleotide pyrophosphates. The chain is NAD-capped RNA hydrolase NudC from Salmonella heidelberg (strain SL476).